A 123-amino-acid chain; its full sequence is Large ribosomal subunit protein uL18 (123 aa).

Belongs to the universal ribosomal protein uL18 family. Part of the 50S ribosomal subunit; part of the 5S rRNA/L5/L18/L25 subcomplex. Contacts the 5S and 23S rRNAs.

Its function is as follows. This is one of the proteins that bind and probably mediate the attachment of the 5S RNA into the large ribosomal subunit, where it forms part of the central protuberance. This chain is Large ribosomal subunit protein uL18, found in Chlamydia trachomatis serovar L2 (strain ATCC VR-902B / DSM 19102 / 434/Bu).